A 241-amino-acid chain; its full sequence is Uridylate kinase (241 aa).

14 to 17 (KLSG) serves as a coordination point for ATP. Gly56 serves as a coordination point for UMP. Positions 57 and 61 each coordinate ATP. Residues Asp77 and 138 to 145 (TGNPFFTT) each bind UMP. ATP is bound by residues Thr165, Tyr171, and Asp174.

It belongs to the UMP kinase family. In terms of assembly, homohexamer.

Its subcellular location is the cytoplasm. The catalysed reaction is UMP + ATP = UDP + ADP. Its pathway is pyrimidine metabolism; CTP biosynthesis via de novo pathway; UDP from UMP (UMPK route): step 1/1. Its activity is regulated as follows. Inhibited by UTP. Its function is as follows. Catalyzes the reversible phosphorylation of UMP to UDP. The chain is Uridylate kinase from Psychrobacter arcticus (strain DSM 17307 / VKM B-2377 / 273-4).